Here is a 373-residue protein sequence, read N- to C-terminus: P2Y purinoceptor 1 (373 aa).

The Extracellular portion of the chain corresponds to 1-51 (MTEVLWPAVPNGTDTAFLADPGSPWGNSTVTSTAAVASPFKCALTKTGFQF). N-linked (GlcNAc...) asparagine glycans are attached at residues N11 and N27. 2 disulfides stabilise this stretch: C42/C296 and C124/C202. An ADP-binding site is contributed by K46. The chain crosses the membrane as a helical span at residues 52–74 (YYLPAVYILVFIIGFLGNSVAIW). At 75 to 87 (MFVFHMKPWSGIS) the chain is on the cytoplasmic side. The helical transmembrane segment at 88–109 (VYMFNLALADFLYVLTLPALIF) threads the bilayer. Over 110–125 (YYFNKTDWIFGDAMCK) the chain is Extracellular. N-linked (GlcNAc...) asparagine glycosylation is present at N113. A helical membrane pass occupies residues 126–147 (LQRFIFHVNLYGSILFLTCISA). Residues 148 to 166 (HRYSGVVYPLKSLGRLKKK) are Cytoplasmic-facing. The chain crosses the membrane as a helical span at residues 167 to 188 (NAVYISVLVWLIVVVGISPILF). At 189-214 (YSGTGIRKNKTITCYDTTSDEYLRSY) the chain is on the extracellular side. A glycan (N-linked (GlcNAc...) asparagine) is linked at N197. 203 to 205 (YDT) lines the ADP pocket. Residues 215–237 (FIYSMCTTVAMFCVPLVLILGCY) form a helical membrane-spanning segment. Residues 238–260 (GLIVRALIYKDLDNSPLRRKSIY) lie on the Cytoplasmic side of the membrane. The chain crosses the membrane as a helical span at residues 261 to 284 (LVIIVLTVFAVSYIPFHVMKTMNL). Residues 283–287 (NLRAR), 303–306 (YATY), and R310 each bind ADP. Residues 285–303 (RARLDFQTPEMCAFNDRVY) are Extracellular-facing. Residues 304-325 (ATYQVTRGLASLNSCVDPILYF) form a helical membrane-spanning segment. The Cytoplasmic segment spans residues 326–373 (LAGDTFRRRLSRATRKASRRSEANLQSKSEDMTLNILSEFKQNGDTSL).

Belongs to the G-protein coupled receptor 1 family.

The protein localises to the cell membrane. Its function is as follows. Receptor for extracellular adenine nucleotides such as ADP. In platelets, binding to ADP leads to mobilization of intracellular calcium ions via activation of phospholipase C, a change in platelet shape, and ultimately platelet aggregation. The protein is P2Y purinoceptor 1 (P2RY1) of Bos taurus (Bovine).